We begin with the raw amino-acid sequence, 424 residues long: 26S proteasome regulatory subunit 6A homolog A (424 aa).

A disordered region spans residues 1 to 21 (MATPMVEDTSSFEEDQLASMS). A2 carries the N-acetylalanine modification. Phosphoserine is present on S19. 212-219 (GPPGTGKT) serves as a coordination point for ATP. K235 is covalently cross-linked (Glycyl lysine isopeptide (Lys-Gly) (interchain with G-Cter in ubiquitin)). T278 is modified (O-acetylthreonine). Residues K279 and K416 each participate in a glycyl lysine isopeptide (Lys-Gly) (interchain with G-Cter in ubiquitin) cross-link.

Belongs to the AAA ATPase family. In terms of assembly, component of the 19S regulatory particle (RP/PA700) base subcomplex of the 26S proteasome. The 26S proteasome is composed of a core protease (CP), known as the 20S proteasome, capped at one or both ends by the 19S regulatory particle (RP/PA700). The RP/PA700 complex is composed of at least 17 different subunits in two subcomplexes, the base and the lid, which form the portions proximal and distal to the 20S proteolytic core, respectively. In terms of tissue distribution, ubiquitous.

It localises to the cytoplasm. The protein resides in the nucleus. In terms of biological role, the 26S proteasome is involved in the ATP-dependent degradation of ubiquitinated proteins. The regulatory (or ATPase) complex confers ATP dependency and substrate specificity to the 26S complex. Interacts with transit peptides of proteins targeted to the chloroplast, and may be involved in the degradation of unimported plastid protein precursors. Plays a essential role in the gametophyte development. Involved in tolerance to zinc deficiency, possibly through alleviation of oxidative stresses or processing of poly-ubiquitinated proteins. This is 26S proteasome regulatory subunit 6A homolog A from Arabidopsis thaliana (Mouse-ear cress).